The following is a 775-amino-acid chain: WD repeat-containing protein pop1 (775 aa).

In terms of domain architecture, F-box spans 298 to 345 (KNFLTGFPAEITNLVLTHLDAPSLCAVSQVSHHWYKLVSSNEELWKSL). WD repeat units follow at residues 444–472 (EHEG…RVWD), 484–538 (GHTS…RLWS), 575–603 (GHTD…RVWK), 615–645 (GHVG…RIWN), and 657–687 (GHSN…RVWD).

In terms of assembly, homodimer and heterodimer with pop2. Binds to cdc18, phosphorylated cig2, cul1, pip1 and skp1.

It localises to the nucleus. Involved in maintenance of ploidy through proteasome dependent degradation of CDK inhibitor rum1 and S-phase initiator cdc18. Functions as a recognition factor for rum1 and cdc18, which are subsequently ubiquitinated and targeted to the 26S proteasome for degradation. Together with pop2, required for cig2 instability during G2 and M phase and cig2 degradation in exponentially growing cells. Regulates cell-cycle progression under starvation through the rum1 protein. The polypeptide is WD repeat-containing protein pop1 (pop1) (Schizosaccharomyces pombe (strain 972 / ATCC 24843) (Fission yeast)).